A 181-amino-acid polypeptide reads, in one-letter code: Acireductone dioxygenase (181 aa).

Fe(2+) contacts are provided by H97, H99, E103, and H141. Ni(2+)-binding residues include H97, H99, E103, and H141.

It belongs to the acireductone dioxygenase (ARD) family. In terms of assembly, monomer. Requires Fe(2+) as cofactor. It depends on Ni(2+) as a cofactor.

It catalyses the reaction 1,2-dihydroxy-5-(methylsulfanyl)pent-1-en-3-one + O2 = 3-(methylsulfanyl)propanoate + CO + formate + 2 H(+). The enzyme catalyses 1,2-dihydroxy-5-(methylsulfanyl)pent-1-en-3-one + O2 = 4-methylsulfanyl-2-oxobutanoate + formate + 2 H(+). Its pathway is amino-acid biosynthesis; L-methionine biosynthesis via salvage pathway; L-methionine from S-methyl-5-thio-alpha-D-ribose 1-phosphate: step 5/6. Its function is as follows. Catalyzes 2 different reactions between oxygen and the acireductone 1,2-dihydroxy-3-keto-5-methylthiopentene (DHK-MTPene) depending upon the metal bound in the active site. Fe-containing acireductone dioxygenase (Fe-ARD) produces formate and 2-keto-4-methylthiobutyrate (KMTB), the alpha-ketoacid precursor of methionine in the methionine recycle pathway. Ni-containing acireductone dioxygenase (Ni-ARD) produces methylthiopropionate, carbon monoxide and formate, and does not lie on the methionine recycle pathway. The protein is Acireductone dioxygenase of Pseudomonas aeruginosa (strain UCBPP-PA14).